The following is a 79-amino-acid chain: VICYVGYNNPQTCPPGGNVCFTKTWCDARCHQLGKRVEMGCATTCPKVNRGVDIKCCSTDKCNPFPKTTPPWKRPRGKP.

5 cysteine pairs are disulfide-bonded: C3/C20, C13/C41, C26/C30, C45/C56, and C57/C62.

It belongs to the three-finger toxin family. Long-chain subfamily. Type II alpha-neurotoxin sub-subfamily. Expressed by the venom gland.

It localises to the secreted. In terms of biological role, binds with high affinity to muscular (alpha-1/CHRNA1) and neuronal (alpha-7/CHRNA7) nicotinic acetylcholine receptor (nAChR) and inhibits acetylcholine from binding to the receptor, thereby impairing neuromuscular and neuronal transmission. Produces paralysis, clear dyspnea and lethality on mice. This chain is Alpha-elapitoxin-Aa2e, found in Acanthophis antarcticus (Common death adder).